Consider the following 161-residue polypeptide: Peroxynitrite isomerase 2 (161 aa).

The GXWXGXG motif lies at 17-23; the sequence is GTWTGRG. A heme b-binding site is contributed by His-152.

It belongs to the nitrobindin family. In terms of assembly, homodimer. The cofactor is heme b.

It carries out the reaction peroxynitrite = nitrate. It participates in nitrogen metabolism. In terms of biological role, heme-binding protein able to scavenge peroxynitrite and to protect free L-tyrosine against peroxynitrite-mediated nitration, by acting as a peroxynitrite isomerase that converts peroxynitrite to nitrate. Therefore, this protein likely plays a role in peroxynitrite sensing and in the detoxification of reactive nitrogen and oxygen species (RNS and ROS, respectively). Is able to bind nitric oxide (NO) in vitro, but may act as a sensor of peroxynitrite levels in vivo. In Mycobacterium avium (strain 104), this protein is Peroxynitrite isomerase 2.